Consider the following 588-residue polypeptide: MKLPVREFDAVVIGAGGAGMRAALQISQSGQTCALLSKVFPTRSHTVSAQGGITVALGNTHEDNWEWHMYDTVKGSDYIGDQDAIEYMCKTGPEAILELEHMGLPFSRLDDGRIYQRPFGGQSKNFGGEQAARTAAAADRTGHALLHTLYQQNLKNHTTIFSEWYALDLVKNQDGAVVGCTALCIETGEVVYFKARATVLATGGAGRIYQSTTNAHINTGDGVGMAIRAGVPVQDMEMWQFHPTGIAGAGVLVTEGCRGEGGYLLNKHGERFMERYAPNAKDLAGRDVVARSIMIEIREGRGCDGPWGPHAKLKLDHLGKEVLESRLPGILELSRTFAHVDPVKEPIPVIPTCHYMMGGIPTKVTGQALTVNEKGEDVVVPGLFAVGEIACVSVHGANRLGGNSLLDLVVFGRAAGLHLQESIAEQGALRDASESDVEASLDRLNRWNNNRNGEDPVAIRKALQECMQHNFSVFREGDAMAKGLEQLKVIRERLKNARLDDTSSEFNTQRVECLELDNLMETAYATAVSANFRTESRGAHSRFDFPDRDDENWLCHSLYLPESESMTRRSVNMEPKLRPAFPPKIRTY.

FAD-binding positions include 14–19, 37–52, and Asp221; these read GAGGAG and SKVFPTRSHTVSAQGG. Residue His45 is modified to Tele-8alpha-FAD histidine. Substrate is bound by residues His242 and Thr254. Lys267 carries the post-translational modification N6-acetyllysine. Catalysis depends on Arg286, which acts as the Proton acceptor. His354 contributes to the substrate binding site. FAD is bound at residue Glu388. Position 399 (Arg399) interacts with substrate. 404–405 serves as a coordination point for FAD; the sequence is SL.

Belongs to the FAD-dependent oxidoreductase 2 family. FRD/SDH subfamily. As to quaternary structure, part of an enzyme complex containing four subunits: a flavoprotein, an iron-sulfur, cytochrome b-556, and a hydrophobic anchor protein. The complex forms trimers. It depends on FAD as a cofactor.

It is found in the cell inner membrane. It carries out the reaction a quinone + succinate = fumarate + a quinol. It functions in the pathway carbohydrate metabolism; tricarboxylic acid cycle; fumarate from succinate (bacterial route): step 1/1. Two distinct, membrane-bound, FAD-containing enzymes are responsible for the catalysis of fumarate and succinate interconversion; the fumarate reductase is used in anaerobic growth, and the succinate dehydrogenase is used in aerobic growth. The sequence is that of Succinate dehydrogenase flavoprotein subunit (sdhA) from Escherichia coli O157:H7.